A 123-amino-acid polypeptide reads, in one-letter code: Mediator of RNA polymerase II transcription subunit 9 (123 aa).

Residues 95-123 adopt a coiled-coil conformation; it reads WQLHIQEKKIELEKKTKHLQRLRESIQKQ.

The protein belongs to the Mediator complex subunit 9 family. As to quaternary structure, component of the Mediator complex.

The protein localises to the nucleus. Component of the Mediator complex, a coactivator involved in the regulated transcription of nearly all RNA polymerase II-dependent genes. Mediator functions as a bridge to convey information from gene-specific regulatory proteins to the basal RNA polymerase II transcription machinery. Mediator is recruited to promoters by direct interactions with regulatory proteins and serves as a scaffold for the assembly of a functional preinitiation complex with RNA polymerase II and the general transcription factors. This Kluyveromyces lactis (strain ATCC 8585 / CBS 2359 / DSM 70799 / NBRC 1267 / NRRL Y-1140 / WM37) (Yeast) protein is Mediator of RNA polymerase II transcription subunit 9 (CSE2).